The sequence spans 375 residues: 23S rRNA (uracil(747)-C(5))-methyltransferase RlmC (375 aa).

The [4Fe-4S] cluster site is built by C3, C11, C14, and C87. Residues Q212, F241, E262, and N307 each coordinate S-adenosyl-L-methionine. The active-site Nucleophile is the C334.

This sequence belongs to the class I-like SAM-binding methyltransferase superfamily. RNA M5U methyltransferase family. RlmC subfamily.

It carries out the reaction uridine(747) in 23S rRNA + S-adenosyl-L-methionine = 5-methyluridine(747) in 23S rRNA + S-adenosyl-L-homocysteine + H(+). Its function is as follows. Catalyzes the formation of 5-methyl-uridine at position 747 (m5U747) in 23S rRNA. The protein is 23S rRNA (uracil(747)-C(5))-methyltransferase RlmC of Escherichia coli (strain K12 / MC4100 / BW2952).